Reading from the N-terminus, the 489-residue chain is Serine/threonine-protein kinase BSK2 (489 aa).

The disordered stretch occupies residues 1 to 30; sequence MGCLHSKTANLPSSDDPSAPNKPESVNGDQ. Gly2 carries the N-myristoyl glycine lipid modification. The span at 7–16 shows a compositional bias: polar residues; that stretch reads KTANLPSSDD. The Protein kinase domain maps to 56 to 322; that stretch reads SCIVSEGGEK…QEEVASHVLM (267 aa). ATP-binding positions include 62–70 and Lys84; that span reads GGEKAPNVV. Asp178 serves as the catalytic Proton acceptor.

Belongs to the protein kinase superfamily. Ser/Thr protein kinase family. Post-translationally, phosphorylated by BRI1 upon brassinolide (BL) treatment.

It is found in the cell membrane. It catalyses the reaction L-seryl-[protein] + ATP = O-phospho-L-seryl-[protein] + ADP + H(+). The catalysed reaction is L-threonyl-[protein] + ATP = O-phospho-L-threonyl-[protein] + ADP + H(+). Probable serine/threonine kinase that acts as a positive regulator of brassinosteroid (BR) signaling downstream of the receptor kinase BRI1. Mediates signal transduction from BRI1 by functioning as substrate of BRI1. The protein is Serine/threonine-protein kinase BSK2 of Arabidopsis thaliana (Mouse-ear cress).